The primary structure comprises 267 residues: uncharacterized protein (267 aa).

The protein belongs to the glycosyltransferase 2 family.

This is an uncharacterized protein from Haemophilus influenzae (strain ATCC 51907 / DSM 11121 / KW20 / Rd).